Consider the following 477-residue polypeptide: Beta-agarase D (477 aa).

The first 20 residues, 1 to 20, serve as a signal peptide directing secretion; it reads MKRSILLAIIAFLQFFTSYG. Residues 22–378 form the GH16 domain; sequence YDWDNVPIPA…WIRVYKPVNA (357 aa). Substrate contacts are provided by residues 94–104, 123–125, Glu174, Glu179, Arg206, and Glu340; these read MQNHVAVSGGN and NNT. Glu174 serves as the catalytic Nucleophile. Glu179 (proton donor) is an active-site residue. Residues 382 to 391 are compositionally biased toward low complexity; the sequence is NSAETTSTVE. The tract at residues 382–402 is disordered; the sequence is NSAETTSTVEKPASFEPQGQP.

It belongs to the glycosyl hydrolase 16 family.

It is found in the secreted. It carries out the reaction Hydrolysis of (1-&gt;4)-beta-D-galactosidic linkages in agarose, giving the tetramer as the predominant product.. Its function is as follows. Cleaves the beta-1,4-linkages between beta-D-galactose and alpha-L-3,6-anhydro-galactose residues in agarose. Cleaves agarose in a random manner with retention of the anomeric-bond configuration, producing beta-anomers that give rise progressively to alpha-anomers when mutarotation takes place. Requires at least 4 consecutive agarose units and is highly intolerant to modifications. This chain is Beta-agarase D (agaD), found in Zobellia galactanivorans (strain DSM 12802 / CCUG 47099 / CIP 106680 / NCIMB 13871 / Dsij).